We begin with the raw amino-acid sequence, 337 residues long: Dehydrogenase FUB6 (337 aa).

It belongs to the zinc-containing alcohol dehydrogenase family. Quinone oxidoreductase subfamily.

It participates in mycotoxin biosynthesis. Functionally, dehydrogenase; part of the gene cluster that mediates the biosynthesis of fusaric acid, a mycotoxin with low to moderate toxicity to animals and humans, but with high phytotoxic properties. L-aspartate is suggested as fusaric acid amino acid precursor that is activated and further processed to O-acetyl-L-homoserine by cluster enzymes aspartate kinase FUB3 and homoserine O-acetyltransferase FUB5, as well as enzymes of the primary metabolism. The polyketide synthase (PKS) FUB1 generates the triketide trans-2-hexenal which is presumptively released by the hydrolase FUB4 and linked to the NRPS-bound amino acid precursor by NAD(P)-dependent dehydrogenase FUB6. FUB1, FUB4, and the non-canonical NRPS Fub8 may form an enzyme complex. Further processing of the NRPS-bound intermediate might be carried out by FUB6 and the O-acetylhomoserine FUB7, enabling a spontaneous electrocyclization to close the carbon backbone of fusaric acid. Dihydrofusaric acid is likely to be released via reduction by the thioester reductase (TR) domain of FUB8 whereupon the final oxidation to fusaric acid may (also) be performed by the FMN-dependent dehydrogenase FUB9. The chain is Dehydrogenase FUB6 from Gibberella fujikuroi (strain CBS 195.34 / IMI 58289 / NRRL A-6831) (Bakanae and foot rot disease fungus).